A 103-amino-acid polypeptide reads, in one-letter code: Large ribosomal subunit protein bL21 (103 aa).

The protein belongs to the bacterial ribosomal protein bL21 family. In terms of assembly, part of the 50S ribosomal subunit. Contacts protein L20.

Functionally, this protein binds to 23S rRNA in the presence of protein L20. This chain is Large ribosomal subunit protein bL21, found in Parvibaculum lavamentivorans (strain DS-1 / DSM 13023 / NCIMB 13966).